We begin with the raw amino-acid sequence, 249 residues long: tRNA (guanine-N(7)-)-methyltransferase (249 aa).

Positions 80, 105, 132, and 155 each coordinate S-adenosyl-L-methionine. D155 is an active-site residue. Substrate is bound by residues K159, D191, and 228–231; that span reads TKFE.

Belongs to the class I-like SAM-binding methyltransferase superfamily. TrmB family.

It catalyses the reaction guanosine(46) in tRNA + S-adenosyl-L-methionine = N(7)-methylguanosine(46) in tRNA + S-adenosyl-L-homocysteine. It functions in the pathway tRNA modification; N(7)-methylguanine-tRNA biosynthesis. Catalyzes the formation of N(7)-methylguanine at position 46 (m7G46) in tRNA. This Mannheimia succiniciproducens (strain KCTC 0769BP / MBEL55E) protein is tRNA (guanine-N(7)-)-methyltransferase.